We begin with the raw amino-acid sequence, 1069 residues long: Calcium-transporting ATPase 10, plasma membrane-type (1069 aa).

The tract at residues 1–29 (MSGQFNNSPRGEDKDVEAGTSSFTEYEDS) is disordered. Serine 2 is modified (N-acetylserine). Over 2–180 (SGQFNNSPRG…NTYPQKKGRS (179 aa)) the chain is Cytoplasmic. The segment at 42–53 (ERLRRWRQAALV) is interaction with calmodulin. The chain crosses the membrane as a helical span at residues 181-201 (FWRFVWEASQDLTLIILIVAA). The Lumenal portion of the chain corresponds to 202 to 219 (VASLALGIKTEGIEKGWY). The helical transmembrane segment at 220-240 (DGISIAFAVLLVIVVTATSDY) threads the bilayer. Topologically, residues 241-369 (RQSLQFQNLN…GGETPLQVRL (129 aa)) are cytoplasmic. A helical transmembrane segment spans residues 370–389 (NGVATFIGIVGLTVAGVVLF). Residues 390–426 (VLVVRYFTGHTKNEQGGPQFIGGKTKFEHVLDDLVEI) lie on the Lumenal side of the membrane. A helical membrane pass occupies residues 427 to 444 (FTVAVTIVVVAVPEGLPL). Residues 445-844 (AVTLTLAYSM…RWGRSVYANI (400 aa)) lie on the Cytoplasmic side of the membrane. The 4-aspartylphosphate intermediate role is filled by aspartate 482. The Mg(2+) site is built by aspartate 789 and aspartate 793. The chain crosses the membrane as a helical span at residues 845–863 (QKFIQFQLTVNVAALVINV). Over 864 to 874 (VAAISAGEVPL) the chain is Lumenal. Residues 875–895 (TAVQLLWVNLIMDTLGALALA) traverse the membrane as a helical segment. The Cytoplasmic segment spans residues 896-915 (TEPPTDHLMDRAPVGRREPL). The chain crosses the membrane as a helical span at residues 916–938 (ITNIMWRNLFIQAMYQVTVLLIL). At 939–951 (NFRGISILHLKSK) the chain is on the lumenal side. A helical membrane pass occupies residues 952-973 (PNAERVKNTVIFNAFVICQVFN). At 974 to 991 (EFNARKPDEINIFRGVLR) the chain is on the cytoplasmic side. The helical transmembrane segment at 992-1013 (NHLFVGIISITIVLQVVIVEFL) threads the bilayer. Residues 1014–1023 (GTFASTTKLD) lie on the Lumenal side of the membrane. Residues 1024 to 1045 (WEMWLVCIGIGSISWPLAVIGK) form a helical membrane-spanning segment. At 1046 to 1069 (LIPVPETPVSQYFRINRWRRNSSG) the chain is on the cytoplasmic side.

Belongs to the cation transport ATPase (P-type) (TC 3.A.3) family. Type IIB subfamily.

It localises to the membrane. The catalysed reaction is Ca(2+)(in) + ATP + H2O = Ca(2+)(out) + ADP + phosphate + H(+). Its activity is regulated as follows. Activated by calmodulin. This magnesium-dependent enzyme catalyzes the hydrolysis of ATP coupled with the translocation of calcium from the cytosol into the endoplasmic reticulum. The protein is Calcium-transporting ATPase 10, plasma membrane-type (ACA10) of Arabidopsis thaliana (Mouse-ear cress).